We begin with the raw amino-acid sequence, 347 residues long: MTVDNRCSNSSLCLRNVTPKQHPARVCSNHWQLKNLISTQNTGEESNPIYYTNSVFVWKIYPNSEKVVQVGQGLSFKPLSLLGKCGYIAAGGQLGEFDYWSPTSKQTHMKLCDQHNNGIEIHRRNCDSHAEALISSNDHTIKVVDLEHGLLRKQLHFPVNMNHASVSNDGRFMVCVGDSPQVFFYEIDRSGEYHLRHTTVADTTDSSFCTSISQRNELFAVASQDSSLSVFDVRYLRTPMLTKTSSRPDPNGSIRSCHFTPPNGGPLDLLLYSEGFSYSHLLDLRTGKDVELVLPSEDRFFSPASQDIFGSCFADDGSSVYVASATHLYEWNIDKRSRICFPSYQLL.

Its subcellular location is the cytoplasm. The protein resides in the nucleus. This is an uncharacterized protein from Schizosaccharomyces pombe (strain 972 / ATCC 24843) (Fission yeast).